Here is a 48-residue protein sequence, read N- to C-terminus: Putative protein P' (48 aa).

In Bos taurus (Bovine), this protein is Putative protein P'.